The primary structure comprises 201 residues: Dermatopontin (201 aa).

The N-terminal stretch at 1–18 (MDLTLLWVLLPLVTTAWG) is a signal peptide. A Pyrrolidone carboxylic acid modification is found at Gln19. The tract at residues 19 to 186 (QYGGYGYPYQ…AVERDRQWKF (168 aa)) is 2 X 53-55 AA tandem repeats. A Sulfotyrosine modification is found at Tyr23. 4 consecutive repeat copies span residues 26–79 (PYQQ…ACMP), 70–75 (DRQWNY), 80–135 (TPQS…CCRY), and 125–130 (DREWQF). 5 disulfide bridges follow: Cys50–Cys77, Cys90–Cys132, Cys106–Cys133, Cys139–Cys196, and Cys143–Cys189. The interval 70–186 (DRQWNYACMP…AVERDRQWKF (117 aa)) is 3 X 6 AA tandem repeats of D-R-[EQ]-W-[NQK]-[FY]. A sulfotyrosine mark is found at Tyr162, Tyr164, and Tyr167. One copy of the 2-3 repeat lies at 181-186 (DRQWKF). Tyr194 carries the post-translational modification Sulfotyrosine.

It belongs to the dermatopontin family. In terms of assembly, interacts with TGFB1, DCN and collagen. Sulfated on tyrosine residue(s).

It is found in the secreted. It localises to the extracellular space. Its subcellular location is the extracellular matrix. In terms of biological role, seems to mediate adhesion by cell surface integrin binding. May serve as a communication link between the dermal fibroblast cell surface and its extracellular matrix environment. Enhances TGFB1 activity. Inhibits cell proliferation. Accelerates collagen fibril formation, and stabilizes collagen fibrils against low-temperature dissociation. The polypeptide is Dermatopontin (Dpt) (Mus musculus (Mouse)).